Consider the following 770-residue polypeptide: MDFSKFLAEDFDVKEWINAAFRAGPKEAAAGKADSHAATLVMKLQLFIQEVNHAVEETSHQALQNMPKVLRDVEALKQEASFLKEQMILVKEDIKKFEQDTSQSMQVLVEIDQVKSRMQLAAESLQEADKWSTLSADIEETFKTQDIAVISAKLTGMQNSLMMLVDTPDYSEKCVHLEALKNRLEALASPQIVAAFTSQSIDQSKMFVKVFSEIDRMPQLLAYYYKCHKVQLLAAWQELCQTDLPLDRQLTGLYDALLGAWHAQIQWASQVFKNPHDVVTVLLIQTLGALVPSLPVCLSSGVERAGPELELVKLLEFYDATAHFAKGLEMALLPHAYEQNLVKVMELVDAVYGPYKPYQLKYGDMEEKYLLIQFSEVPLEHGEVIDCVQELSHSVNKLFGLSSAAVDRCIRFTSGLGTCGLLTALKSLFAKYVSDFTSTLHSIRKKYRLDDIPLNSLFQEDWTAFQNSIRIIATCGELLRQCGDFEQQLANRILSTAGKYLSDSFSPRSLTGFQDSILTDKKSSAKNPWQEYNYLQKDSPAEYGSLMEILYTLKEKGSSNHHLLSASRSALTRLNQQAHQLAFDSVFLRIKQQLLLIPKMDSWNTAGIGETLTDDLPTFSLTPLEYISNIGQYIMSLPLNLEPFVTQEDSALELALHAGKLPFPPEQGDELPELDNMADNWLGSIARATMQTYCDAILQIPELTPHSTKQLATDIDYLINVMDALGLQPSRTLQNIVMLLKAKPEDYRQVSKGLPRRLATTVATMRSVDY.

The protein belongs to the COG7 family. Component of the conserved oligomeric Golgi complex which is composed of eight different subunits and is required for normal Golgi morphology and localization.

The protein localises to the golgi apparatus membrane. Required for normal Golgi function. In Bos taurus (Bovine), this protein is Conserved oligomeric Golgi complex subunit 7 (COG7).